A 143-amino-acid polypeptide reads, in one-letter code: Large ribosomal subunit protein uL11 (143 aa).

The protein belongs to the universal ribosomal protein uL11 family. In terms of assembly, part of the ribosomal stalk of the 50S ribosomal subunit. Interacts with L10 and the large rRNA to form the base of the stalk. L10 forms an elongated spine to which L12 dimers bind in a sequential fashion forming a multimeric L10(L12)X complex. One or more lysine residues are methylated.

Its function is as follows. Forms part of the ribosomal stalk which helps the ribosome interact with GTP-bound translation factors. In Bifidobacterium longum (strain DJO10A), this protein is Large ribosomal subunit protein uL11.